The following is a 223-amino-acid chain: DnaJ homolog subfamily B member 9 (223 aa).

Positions 1-23 are cleaved as a signal peptide; it reads MATPQSIFIFAICILMITELILA. The region spanning 26 to 90 is the J domain; the sequence is SYYDILGVPK…NRRKEYDTLG (65 aa). The tract at residues 91 to 223 is divergent targeting domain; the sequence is HSAFTSGKGQ…VTTYTDCSGQ (133 aa). The residue at position 133 (Ser133) is a Phosphoserine.

Interacts with HSPA5/BiP; interaction is direct. Interacts with ERN1/IRE1 (via the luminal region). Interacts with DERL1. Widely expressed. Expressed at highest level in the liver, placenta and kidney.

The protein resides in the endoplasmic reticulum lumen. Co-chaperone for Hsp70 protein HSPA5/BiP that acts as a key repressor of the ERN1/IRE1-mediated unfolded protein response (UPR). J domain-containing co-chaperones stimulate the ATPase activity of Hsp70 proteins and are required for efficient substrate recognition by Hsp70 proteins. In the unstressed endoplasmic reticulum, interacts with the luminal region of ERN1/IRE1 and selectively recruits HSPA5/BiP: HSPA5/BiP disrupts the dimerization of the active ERN1/IRE1 luminal region, thereby inactivating ERN1/IRE1. Also involved in endoplasmic reticulum-associated degradation (ERAD) of misfolded proteins. Required for survival of B-cell progenitors and normal antibody production. This Homo sapiens (Human) protein is DnaJ homolog subfamily B member 9 (DNAJB9).